The primary structure comprises 1174 residues: Nucleolar complex protein 1 (1174 aa).

Disordered stretches follow at residues 1-20 (MPAAVATGVQFGGPPKNKKI), 29-237 (VVKQ…EESQ), 715-742 (YEDVKDEADDTKDSNPLEEKADNDVKSS), 893-922 (AQNKKQKEIKKDAAEEGDDGEAGEEYLKEG), 944-1085 (GVDE…GGRS), and 1116-1174 (VKGQ…KRKH). The span at 33–63 (NKKEHPQRPKFEGKEQVKKPQKIKFGEDGKA) shows a compositional bias: basic and acidic residues. A compositionally biased stretch (polar residues) spans 95–104 (ASKSFNQNHK). Composition is skewed to basic and acidic residues over residues 113-122 (KFGEDREAVH) and 176-200 (KFGDDGESKENFKKPQRIKFDEDGA). Acidic residues-rich tracts occupy residues 207 to 216 (SDGDSDEELG) and 715 to 724 (YEDVKDEADD). 2 stretches are compositionally biased toward basic and acidic residues: residues 725–739 (TKDSNPLEEKADNDV) and 897–906 (KQKEIKKDAA). Acidic residues-rich tracts occupy residues 907–916 (EEGDDGEAGE), 945–954 (VDEEQDEEEL), 981–1038 (AEDE…DEGS), and 1048–1065 (DSSDAPESPDEEDDDDED). Over residues 1127 to 1143 (NKDKSSDKQLKWEENRR) the composition is skewed to basic and acidic residues. Residues 1156–1166 (GKPAAKGGRPQ) are compositionally biased toward low complexity.

This sequence belongs to the CBF/MAK21 family.

The protein localises to the nucleus. It is found in the nucleolus. In terms of biological role, involved in rRNA processing and ribosome maturation. May also act as a transcription factor. The chain is Nucleolar complex protein 1 from Drosophila melanogaster (Fruit fly).